The primary structure comprises 314 residues: Serine protease 46 (314 aa).

One can recognise a Peptidase S1 domain in the interval valine 44–glycine 281. Cysteine 69 and cysteine 85 form a disulfide bridge. Residues histidine 84 and aspartate 130 each act as charge relay system in the active site. Disulfide bonds link cysteine 164–cysteine 239, cysteine 197–cysteine 219, and cysteine 229–cysteine 257. Serine 233 acts as the Charge relay system in catalysis. Residues phenylalanine 293 to leucine 313 traverse the membrane as a helical segment.

Belongs to the peptidase S1 family.

The protein localises to the membrane. This chain is Serine protease 46 (Prss46), found in Mus musculus (Mouse).